Reading from the N-terminus, the 307-residue chain is Taste receptor type 2 member 41 (307 aa).

Residues 1-7 lie on the Extracellular side of the membrane; it reads MQAALTA. The helical transmembrane segment at 8-28 threads the bilayer; it reads FFMLFFSLLSLLGIAANGFIV. The Cytoplasmic portion of the chain corresponds to 29-40; it reads LVLGREWLQYGR. A helical membrane pass occupies residues 41 to 61; that stretch reads LLPLDMILISLGVSRFCLQLV. Residues 62–88 lie on the Extracellular side of the membrane; sequence GTVYNFYYSAHKVEYSGGLSRQFFHLH. The chain crosses the membrane as a helical span at residues 89–109; it reads WHFLNLATFXFCSWLSVLFCV. Residues 110–129 lie on the Cytoplasmic side of the membrane; it reads KXANITHPTFLWLKWRFPGW. A helical membrane pass occupies residues 130–150; the sequence is VPWLLLGSVLISFIITLLLFW. Topologically, residues 151-183 are extracellular; the sequence is VNYPVYQEFLIRKFSGNMTYEWNTRIEMYYLPS. The N-linked (GlcNAc...) asparagine glycan is linked to Asn167. Residues 184–204 form a helical membrane-spanning segment; the sequence is LKLVIWSIPCSVFLVSIMLLI. Topologically, residues 205-234 are cytoplasmic; the sequence is NSLRRHTWRMQHNGHSLQDPSTQAHTRAXK. A helical membrane pass occupies residues 235-255; it reads SLISFLILYVLSFLSLIIDAT. The Extracellular segment spans residues 256–264; sequence KFISMQNDF. A helical transmembrane segment spans residues 265–285; sequence YWPWQTAVYLGVSVHPFILIF. At 286–307 the chain is on the cytoplasmic side; the sequence is SNLKLRSVFWKLLLLARGFWVA.

The protein belongs to the G-protein coupled receptor T2R family.

The protein localises to the membrane. Functionally, receptor that may play a role in the perception of bitterness and is gustducin-linked. May play a role in sensing the chemical composition of the gastrointestinal content. The activity of this receptor may stimulate alpha gustducin, mediate PLC-beta-2 activation and lead to the gating of TRPM5. The polypeptide is Taste receptor type 2 member 41 (TAS2R41) (Pongo pygmaeus (Bornean orangutan)).